We begin with the raw amino-acid sequence, 307 residues long: Methionyl-tRNA formyltransferase (307 aa).

108–111 (SLLP) is a (6S)-5,6,7,8-tetrahydrofolate binding site.

The protein belongs to the Fmt family.

It catalyses the reaction L-methionyl-tRNA(fMet) + (6R)-10-formyltetrahydrofolate = N-formyl-L-methionyl-tRNA(fMet) + (6S)-5,6,7,8-tetrahydrofolate + H(+). Attaches a formyl group to the free amino group of methionyl-tRNA(fMet). The formyl group appears to play a dual role in the initiator identity of N-formylmethionyl-tRNA by promoting its recognition by IF2 and preventing the misappropriation of this tRNA by the elongation apparatus. The sequence is that of Methionyl-tRNA formyltransferase from Renibacterium salmoninarum (strain ATCC 33209 / DSM 20767 / JCM 11484 / NBRC 15589 / NCIMB 2235).